Consider the following 359-residue polypeptide: MSTENTLSVADLARENVRNLVPYQSARRLGGNGDVWLNANEFPTAVEFQLTQQTLNRYPECQPKAVIENYAQYAGVKPEQVLVSRGADEGIELVIRAFCEPGKDAILYCPPTYGMYSVSAETIGVERRTVPALENWQLDLQGISDNLDGAKVVFVCSPNNPTGQLINPQDLRTLLELTRGKAIVVADEAYIEFCPQATLAGWLVKYPHLVILRTLSKAFALAGLRCGFTLANEEVINLLLKVIAPYPLSTPVADIAAQALSPQGINVMRDRVAQTVQERQYLVNALQQTACVEHVFDSETNYILARFTASSSVFKSLWDQGIILRDQNKQPSLSGCLRITVGTRQENQRVIDALRAEPV.

Lysine 217 is subject to N6-(pyridoxal phosphate)lysine.

The protein belongs to the class-II pyridoxal-phosphate-dependent aminotransferase family. Histidinol-phosphate aminotransferase subfamily. As to quaternary structure, homodimer. Requires pyridoxal 5'-phosphate as cofactor.

It catalyses the reaction L-histidinol phosphate + 2-oxoglutarate = 3-(imidazol-4-yl)-2-oxopropyl phosphate + L-glutamate. The protein operates within amino-acid biosynthesis; L-histidine biosynthesis; L-histidine from 5-phospho-alpha-D-ribose 1-diphosphate: step 7/9. This is Histidinol-phosphate aminotransferase from Salmonella typhi.